The sequence spans 1381 residues: Serine-aspartate repeat-containing protein D (1381 aa).

The first 35 residues, 1–35, serve as a signal peptide directing secretion; the sequence is MLNRENKTAITRKGMVSNRLNKFSIRKYTVGTASI. A YSIRK-G/S signaling motif motif is present at residues 23-34; the sequence is FSIRKYTVGTAS. A ligand binding A region region spans residues 36 to 568; it reads LVGTTLIFGL…NNQSGGAGQE (533 aa). Residues 54 to 185 are disordered; it reads ESTNKELNEA…NKKVDAKTES (132 aa). Composition is skewed to polar residues over residues 62 to 71 and 94 to 108; these read EATTSASDNQ and EMVS…SNGN. Residues 130 to 145 are compositionally biased toward basic and acidic residues; it reads KSDEQASPKSTNEDLN. Composition is skewed to polar residues over residues 146 to 155 and 163 to 173; these read TKQTISNQEA and NKSVVNVQPTN. Positions 174 to 183 are enriched in basic and acidic residues; the sequence is EENKKVDAKT. 5 CNA-B domains span residues 569-680, 681-791, 792-901, 902-1012, and 1013-1123; these read VYKI…IYKP, KYNL…YKTP, KYNL…FYKP, TYNL…YKTP, and KYSL…EEET. Disordered regions lie at residues 857 to 883, 972 to 992, and 1078 to 1357; these read ETPS…TSTT, YTPT…GLTT, and EKPA…SNNA. 2 stretches are compositionally biased toward polar residues: residues 860–869 and 972–981; these read SGYTPTQVGS and YTPTSVTSGN. Acidic residues-rich tracts occupy residues 1091–1101, 1118–1134, 1142–1164, and 1172–1320; these read TEDDKDADGGE, YYEE…DSDS, and SDSD…DSDS. Positions 1344–1348 match the LPXTG sorting signal motif; that stretch reads LPETG. Pentaglycyl murein peptidoglycan amidated threonine is present on Thr-1347. The propeptide at 1348-1381 is removed by sortase; sequence GNENSGSNNATLFGGLFAALGSLLLFGRRKKQNK.

This sequence belongs to the serine-aspartate repeat-containing protein (SDr) family. As to quaternary structure, interacts with host DSG1; this interaction increases S.aureus adherence to keratinocytes.

The protein localises to the secreted. It is found in the cell wall. In terms of biological role, cell surface-associated calcium-binding protein which plays an important role in adhesion and pathogenesis. Mediates interactions with components of the extracellular matrix such as host DSG1 to promote bacterial adhesion to host cells. Contributes to the resistance to killing by innate immune components such as neutrophils present in blood and thus attenuates bacterial clearance. The polypeptide is Serine-aspartate repeat-containing protein D (sdrD) (Staphylococcus aureus (strain USA300)).